Here is a 251-residue protein sequence, read N- to C-terminus: Triosephosphate isomerase (251 aa).

9–11 (NWK) is a binding site for substrate. His-95 (electrophile) is an active-site residue. Residue Glu-167 is the Proton acceptor of the active site. Substrate-binding positions include Gly-173, Ser-213, and 234 to 235 (GG). Ser-213 is modified (phosphoserine).

The protein belongs to the triosephosphate isomerase family. Homodimer.

Its subcellular location is the cytoplasm. It carries out the reaction D-glyceraldehyde 3-phosphate = dihydroxyacetone phosphate. Its pathway is carbohydrate biosynthesis; gluconeogenesis. It functions in the pathway carbohydrate degradation; glycolysis; D-glyceraldehyde 3-phosphate from glycerone phosphate: step 1/1. Its function is as follows. Involved in the gluconeogenesis. Catalyzes stereospecifically the conversion of dihydroxyacetone phosphate (DHAP) to D-glyceraldehyde-3-phosphate (G3P). This Bacillus cytotoxicus (strain DSM 22905 / CIP 110041 / 391-98 / NVH 391-98) protein is Triosephosphate isomerase.